Reading from the N-terminus, the 272-residue chain is Formamidopyrimidine-DNA glycosylase (272 aa).

Catalysis depends on Pro2, which acts as the Schiff-base intermediate with DNA. The active-site Proton donor is the Glu3. Lys57 functions as the Proton donor; for beta-elimination activity in the catalytic mechanism. Residues His90, Arg109, and Lys150 each coordinate DNA. The FPG-type zinc finger occupies 235–269 (HVYGRAKKKCLLCSSIIQEEKIGQRNTFWCGHCQP). The Proton donor; for delta-elimination activity role is filled by Arg259.

Belongs to the FPG family. In terms of assembly, monomer. The cofactor is Zn(2+).

The catalysed reaction is Hydrolysis of DNA containing ring-opened 7-methylguanine residues, releasing 2,6-diamino-4-hydroxy-5-(N-methyl)formamidopyrimidine.. The enzyme catalyses 2'-deoxyribonucleotide-(2'-deoxyribose 5'-phosphate)-2'-deoxyribonucleotide-DNA = a 3'-end 2'-deoxyribonucleotide-(2,3-dehydro-2,3-deoxyribose 5'-phosphate)-DNA + a 5'-end 5'-phospho-2'-deoxyribonucleoside-DNA + H(+). Its function is as follows. Involved in base excision repair of DNA damaged by oxidation or by mutagenic agents. Acts as a DNA glycosylase that recognizes and removes damaged bases. Has a preference for oxidized purines, such as 7,8-dihydro-8-oxoguanine (8-oxoG). Has AP (apurinic/apyrimidinic) lyase activity and introduces nicks in the DNA strand. Cleaves the DNA backbone by beta-delta elimination to generate a single-strand break at the site of the removed base with both 3'- and 5'-phosphates. This is Formamidopyrimidine-DNA glycosylase from Aliivibrio fischeri (strain ATCC 700601 / ES114) (Vibrio fischeri).